The chain runs to 420 residues: UDP-N-acetylglucosamine 1-carboxyvinyltransferase (420 aa).

22-23 (KN) provides a ligand contact to phosphoenolpyruvate. R93 is a binding site for UDP-N-acetyl-alpha-D-glucosamine. C117 acts as the Proton donor in catalysis. The residue at position 117 (C117) is a 2-(S-cysteinyl)pyruvic acid O-phosphothioketal. The UDP-N-acetyl-alpha-D-glucosamine site is built by D307 and I329.

This sequence belongs to the EPSP synthase family. MurA subfamily.

It is found in the cytoplasm. It catalyses the reaction phosphoenolpyruvate + UDP-N-acetyl-alpha-D-glucosamine = UDP-N-acetyl-3-O-(1-carboxyvinyl)-alpha-D-glucosamine + phosphate. The protein operates within cell wall biogenesis; peptidoglycan biosynthesis. In terms of biological role, cell wall formation. Adds enolpyruvyl to UDP-N-acetylglucosamine. The polypeptide is UDP-N-acetylglucosamine 1-carboxyvinyltransferase (Saccharophagus degradans (strain 2-40 / ATCC 43961 / DSM 17024)).